The chain runs to 141 residues: Auxin-responsive protein SAUR61 (141 aa).

This sequence belongs to the ARG7 family.

The protein localises to the cell membrane. Functionally, may promote auxin-stimulated organ elongation, such as hypocotyls, stamen filaments and petals. The chain is Auxin-responsive protein SAUR61 from Arabidopsis thaliana (Mouse-ear cress).